The following is a 382-amino-acid chain: tRNA(Met) cytidine acetate ligase (382 aa).

ATP is bound by residues 7–20 (ITEYNPFHNGHVYH), Gly100, Asn153, and Arg178.

It belongs to the TmcAL family.

Its subcellular location is the cytoplasm. The catalysed reaction is cytidine(34) in elongator tRNA(Met) + acetate + ATP = N(4)-acetylcytidine(34) in elongator tRNA(Met) + AMP + diphosphate. Functionally, catalyzes the formation of N(4)-acetylcytidine (ac(4)C) at the wobble position of elongator tRNA(Met), using acetate and ATP as substrates. First activates an acetate ion to form acetyladenylate (Ac-AMP) and then transfers the acetyl group to tRNA to form ac(4)C34. The sequence is that of tRNA(Met) cytidine acetate ligase from Staphylococcus carnosus (strain TM300).